The following is a 466-amino-acid chain: 23S rRNA (uracil(1939)-C(5))-methyltransferase RlmD (466 aa).

The TRAM domain occupies 1–54 (MVDVLNIESLDLEARGIAHRDGKVLFVEGALPGERVTVQTVRRKPSYEIAKVEE). Positions 67, 73, 76, and 155 each coordinate [4Fe-4S] cluster. S-adenosyl-L-methionine is bound by residues Gln264, Phe293, Asn298, Glu314, Asn342, and Asp363. Cys393 (nucleophile) is an active-site residue.

It belongs to the class I-like SAM-binding methyltransferase superfamily. RNA M5U methyltransferase family. RlmD subfamily.

The enzyme catalyses uridine(1939) in 23S rRNA + S-adenosyl-L-methionine = 5-methyluridine(1939) in 23S rRNA + S-adenosyl-L-homocysteine + H(+). In terms of biological role, catalyzes the formation of 5-methyl-uridine at position 1939 (m5U1939) in 23S rRNA. This Bordetella parapertussis (strain 12822 / ATCC BAA-587 / NCTC 13253) protein is 23S rRNA (uracil(1939)-C(5))-methyltransferase RlmD.